The sequence spans 915 residues: Bifunctional uridylyltransferase/uridylyl-removing enzyme (915 aa).

Residues 1–360 (MFNCAVTAID…PDEERPKKQP (360 aa)) form a uridylyltransferase region. Residues 361 to 731 (INARFNQVGE…EHRELALDAV (371 aa)) form a uridylyl-removing region. One can recognise an HD domain in the interval 478 to 594 (VDAHTLFLIR…TLFADLVGNV (117 aa)). ACT domains are found at residues 732-817 (QVFV…RIPR) and 840-915 (IMSL…NDSI).

The protein belongs to the GlnD family. Requires Mg(2+) as cofactor.

The catalysed reaction is [protein-PII]-L-tyrosine + UTP = [protein-PII]-uridylyl-L-tyrosine + diphosphate. The enzyme catalyses [protein-PII]-uridylyl-L-tyrosine + H2O = [protein-PII]-L-tyrosine + UMP + H(+). With respect to regulation, uridylyltransferase (UTase) activity is inhibited by glutamine, while glutamine activates uridylyl-removing (UR) activity. In terms of biological role, modifies, by uridylylation and deuridylylation, the PII regulatory proteins (GlnB and homologs), in response to the nitrogen status of the cell that GlnD senses through the glutamine level. Under low glutamine levels, catalyzes the conversion of the PII proteins and UTP to PII-UMP and PPi, while under higher glutamine levels, GlnD hydrolyzes PII-UMP to PII and UMP (deuridylylation). Thus, controls uridylylation state and activity of the PII proteins, and plays an important role in the regulation of nitrogen assimilation and metabolism. This is Bifunctional uridylyltransferase/uridylyl-removing enzyme from Psychrobacter arcticus (strain DSM 17307 / VKM B-2377 / 273-4).